A 772-amino-acid polypeptide reads, in one-letter code: U3 small nucleolar RNA-associated protein 25 homolog (772 aa).

The segment at 1–179 (MGKRRNRGRS…SEEFTDVKHE (179 aa)) is disordered. Promotes p53/TP53 degradation stretches follow at residues 1 to 201 (MGKR…SQRP) and 589 to 651 (VQLP…KKEE). A Phosphoserine modification is found at Ser-10. The segment covering 25 to 43 (RDFGEEHPFYDRVSKKEAK) has biased composition (basic and acidic residues). Phosphoserine is present on residues Ser-52, Ser-60, and Ser-64. Residues 54 to 70 (DSSHSESESESEQEHVS) are compositionally biased toward basic and acidic residues. Positions 84–124 (EEEEEEEEEEEEEEEEEEEEEEEEEDDSAVGDAEMNEEAGS) are enriched in acidic residues. The span at 127–136 (GSVGEAAVSE) shows a compositional bias: low complexity. Residues 169-179 (SSEEFTDVKHE) are compositionally biased toward basic and acidic residues. Positions 652 to 713 (LNFTHICEYT…YELPTYPHFY (62 aa)) are represses p53/TP53 degradation.

Belongs to the UTP25 family. In terms of assembly, interacts with CAPN3; the interaction is required for CAPN3 translocation to the nucleolus. Phosphorylated. Phosphorylation is required to promote p53/TP53 degradation in the nucleolus which promotes cell cycle progression and liver development. As to expression, expressed in all tissues tested: brain, small intestine, large intestine, stomach, liver, spleen, thymus, lung, kidney and testes (at protein level).

The protein localises to the nucleus. Its subcellular location is the nucleolus. Component of the ribosomal small subunit processome for the biogenesis of ribosomes, functions in pre-ribosomal RNA (pre-rRNA) processing. Essential for embryonic development in part through the regulation of p53 pathway. Controls the expansion growth of digestive organs and liver. Also involved in the sympathetic neuronal development. Mediates, with CAPN3, the proteasome-independent degradation of p53/TP53. This Mus musculus (Mouse) protein is U3 small nucleolar RNA-associated protein 25 homolog.